A 67-amino-acid chain; its full sequence is Large ribosomal subunit protein uL29 (67 aa).

The protein belongs to the universal ribosomal protein uL29 family.

This chain is Large ribosomal subunit protein uL29, found in Cereibacter sphaeroides (strain ATCC 17025 / ATH 2.4.3) (Rhodobacter sphaeroides).